The chain runs to 136 residues: Large ribosomal subunit protein bL17 (136 aa).

The protein belongs to the bacterial ribosomal protein bL17 family. Part of the 50S ribosomal subunit. Contacts protein L32.

The chain is Large ribosomal subunit protein bL17 from Rhodopseudomonas palustris (strain BisA53).